Reading from the N-terminus, the 286-residue chain is Toxin zeta (286 aa).

39–46 is an ATP binding site; that stretch reads GQPGSGKT. A disordered region spans residues 249–286; sequence MVQNQHQETPEFKAIQQKMESLQPPTPPIPKTPKLPGI. Residues 272–286 show a composition bias toward pro residues; that stretch reads PPTPPIPKTPKLPGI.

The protein belongs to the zeta toxin family. As to quaternary structure, in the presence of the epsilon antitoxin, forms an inactive PezA(2)PezT(2) heterotetramer.

The catalysed reaction is UDP-N-acetyl-alpha-D-glucosamine + ATP = UDP-N-acetyl-alpha-D-glucosamine 3'-phosphate + ADP + H(+). Toxic component of a type II toxin-antitoxin (TA) system. Phosphorylates UDP-N-acetyl-D-glucosamine (UNAG) on the 3'-hydroxyl group of the N-acetyl-D-glucosamine moiety, yielding UNAG-3P. UNAG-3P inhibits MurA, the first committed step in cell wall synthesis, which is then blocked. Phosphorylation is inhibited by cognate epsilon antitoxin. Part of a postsegregational killing (PSK) system involved in the killing of plasmid-free cells. The zeta toxin induces programmed cell death. In Enterococcus hirae, this protein is Toxin zeta.